The sequence spans 52 residues: Large ribosomal subunit protein bL33 (52 aa).

Belongs to the bacterial ribosomal protein bL33 family.

This is Large ribosomal subunit protein bL33 from Chlamydia abortus (strain DSM 27085 / S26/3) (Chlamydophila abortus).